The primary structure comprises 363 residues: NAD(P)H-quinone oxidoreductase subunit 1, chloroplastic (363 aa).

Transmembrane regions (helical) follow at residues 30–50, 98–118, 129–149, 248–268, 300–320, and 336–356; these read LVPI…IVWL, FSIG…IIPF, IGVF…LMSG, YSGI…LVSS, VFGT…FLFI, and LLNL…LLTT.

This sequence belongs to the complex I subunit 1 family. NDH is composed of at least 16 different subunits, 5 of which are encoded in the nucleus.

The protein localises to the plastid. It is found in the chloroplast thylakoid membrane. The catalysed reaction is a plastoquinone + NADH + (n+1) H(+)(in) = a plastoquinol + NAD(+) + n H(+)(out). The enzyme catalyses a plastoquinone + NADPH + (n+1) H(+)(in) = a plastoquinol + NADP(+) + n H(+)(out). In terms of biological role, NDH shuttles electrons from NAD(P)H:plastoquinone, via FMN and iron-sulfur (Fe-S) centers, to quinones in the photosynthetic chain and possibly in a chloroplast respiratory chain. The immediate electron acceptor for the enzyme in this species is believed to be plastoquinone. Couples the redox reaction to proton translocation, and thus conserves the redox energy in a proton gradient. This is NAD(P)H-quinone oxidoreductase subunit 1, chloroplastic from Vitis vinifera (Grape).